The following is a 78-amino-acid chain: Putative DNA-binding protein MT0521 (78 aa).

Positions 24 to 45 (LLTVAEVAALMRVSKMTVYRLV) form a DNA-binding region, H-T-H motif.

The protein is Putative DNA-binding protein MT0521 of Mycobacterium tuberculosis (strain CDC 1551 / Oshkosh).